Consider the following 238-residue polypeptide: MTHVEVVATIAPQLSIEETLIQKINHRIDAIDVLELRIDQIENVTVDQVAEMITKLKVMQDSFKLLVTYRTKLQGGYGQFTNDSYLNLISDLANINGIDMIDIEWQADIDIEKHQRIITHLQQYNKEVVISHHNFESTPPLDELQFIFFKMQKFNPEYVKLAVMPHNKNDVLNLLQAMSTFSDTMDCKVVGISMSKLGLISRTAQGVFGGALTYGCIGVPQAPGQIDVTDLKAQVTLY.

Residues 35 to 37 (ELR) and Arg70 each bind 3-dehydroquinate. His133 (proton donor/acceptor) is an active-site residue. Lys160 acts as the Schiff-base intermediate with substrate in catalysis. 3-dehydroquinate contacts are provided by Arg202 and Gln225.

It belongs to the type-I 3-dehydroquinase family. In terms of assembly, homodimer.

The enzyme catalyses 3-dehydroquinate = 3-dehydroshikimate + H2O. The protein operates within metabolic intermediate biosynthesis; chorismate biosynthesis; chorismate from D-erythrose 4-phosphate and phosphoenolpyruvate: step 3/7. Functionally, involved in the third step of the chorismate pathway, which leads to the biosynthesis of aromatic amino acids. Catalyzes the cis-dehydration of 3-dehydroquinate (DHQ) and introduces the first double bond of the aromatic ring to yield 3-dehydroshikimate. In Staphylococcus aureus (strain USA300), this protein is 3-dehydroquinate dehydratase.